Reading from the N-terminus, the 52-residue chain is Large ribosomal subunit protein eL39 (52 aa).

Belongs to the eukaryotic ribosomal protein eL39 family. Interacts with YIH1.

In Encephalitozoon cuniculi (strain GB-M1) (Microsporidian parasite), this protein is Large ribosomal subunit protein eL39 (RPL39).